The primary structure comprises 323 residues: Beta-ketoacyl-[acyl-carrier-protein] synthase III (323 aa).

Active-site residues include cysteine 113 and histidine 250. Residues 251 to 255 (QANRR) are ACP-binding. Residue asparagine 280 is part of the active site.

This sequence belongs to the thiolase-like superfamily. FabH family. In terms of assembly, homodimer.

It is found in the cytoplasm. The catalysed reaction is malonyl-[ACP] + acetyl-CoA + H(+) = 3-oxobutanoyl-[ACP] + CO2 + CoA. It functions in the pathway lipid metabolism; fatty acid biosynthesis. In terms of biological role, catalyzes the condensation reaction of fatty acid synthesis by the addition to an acyl acceptor of two carbons from malonyl-ACP. Catalyzes the first condensation reaction which initiates fatty acid synthesis and may therefore play a role in governing the total rate of fatty acid production. Possesses both acetoacetyl-ACP synthase and acetyl transacylase activities. Its substrate specificity determines the biosynthesis of branched-chain and/or straight-chain of fatty acids. This chain is Beta-ketoacyl-[acyl-carrier-protein] synthase III, found in Rhizobium rhizogenes (strain K84 / ATCC BAA-868) (Agrobacterium radiobacter).